Here is a 95-residue protein sequence, read N- to C-terminus: Small ribosomal subunit protein mS37 (95 aa).

Residues 27-69 (ANRCLVLMSNLLQCWSSNGHMNPVCEKLATDLKACTSQNVMGS) enclose the CHCH domain. 2 consecutive short sequence motifs (cx9C motif) follow at residues 30–40 (CLVLMSNLLQC) and 51–61 (CEKLATDLKAC). Cystine bridges form between cysteine 30-cysteine 61 and cysteine 40-cysteine 51.

This sequence belongs to the mitochondrion-specific ribosomal protein mS37 family. In terms of assembly, component of the mitochondrial small ribosomal subunit.

The protein localises to the mitochondrion. Its function is as follows. Involved in mitochondrial genome encoded proteins translation. This chain is Small ribosomal subunit protein mS37 (MRP10), found in Eremothecium gossypii (strain ATCC 10895 / CBS 109.51 / FGSC 9923 / NRRL Y-1056) (Yeast).